Consider the following 335-residue polypeptide: Corrinoid adenosyltransferase PduO (335 aa).

H206 provides a ligand contact to heme.

Belongs to the Cob(I)alamin adenosyltransferase family. PduO subfamily. As to quaternary structure, forms a complex with PduS. Heme b is required as a cofactor. Requires Mg(2+) as cofactor.

The protein localises to the bacterial microcompartment. It catalyses the reaction cob(I)alamin-[corrinoid adenosyltransferase] + ATP = apo-[corrinoid adenosyltransferase] + adenosylcob(III)alamin + triphosphate. The protein operates within polyol metabolism; 1,2-propanediol degradation. It functions in the pathway cofactor biosynthesis; adenosylcobalamin biosynthesis. In terms of biological role, converts cob(I)alamin to adenosylcobalamin (adenosylcob(III)alamin), the cofactor for propanediol dehydratase. Found in the bacterial microcompartment (BMC) dedicated to 1,2-propanediol (1,2-PD) degradation. PduS and PduO allow regeneration of the adenosylcobalamin cofactor within the BMC. Its function is as follows. Expression of a cosmid containing the full 21-gene pdu operon in E.coli allows E.coli to grow on 1,2-propanediol (1,2-PD) with the appearance of bacterial microcompartments (BMC) in its cytoplasm. Functionally, the 1,2-PD-specific bacterial microcompartment (BMC) concentrates low levels of 1,2-PD catabolic enzymes, concentrates volatile reaction intermediates thus enhancing pathway flux and keeps the level of toxic, mutagenic propionaldehyde low. This is Corrinoid adenosyltransferase PduO from Citrobacter freundii.